A 121-amino-acid chain; its full sequence is MLESYFPIFVVISIAIILAVVLLSIGKIIGPKRNNPEKLTPYESGMDPVGSTRTRVTVRFYLVAMIFIVFDIEVIFMYPWAVSFRELSGFYGLIPMVTFVLILLAGYYYILKKKALDWDEE.

3 helical membrane passes run 6 to 26 (FPIF…LSIG), 62 to 82 (LVAM…PWAV), and 90 to 110 (FYGL…YYYI).

It belongs to the complex I subunit 3 family. NDH-1 is composed of 14 different subunits. Subunits NuoA, H, J, K, L, M, N constitute the membrane sector of the complex.

Its subcellular location is the cell inner membrane. It carries out the reaction a quinone + NADH + 5 H(+)(in) = a quinol + NAD(+) + 4 H(+)(out). Functionally, NDH-1 shuttles electrons from NADH, via FMN and iron-sulfur (Fe-S) centers, to quinones in the respiratory chain. The immediate electron acceptor for the enzyme in this species is believed to be a menaquinone. Couples the redox reaction to proton translocation (for every two electrons transferred, four hydrogen ions are translocated across the cytoplasmic membrane), and thus conserves the redox energy in a proton gradient. The sequence is that of NADH-quinone oxidoreductase subunit A 1 from Chloroherpeton thalassium (strain ATCC 35110 / GB-78).